A 177-amino-acid polypeptide reads, in one-letter code: Large ribosomal subunit protein uL6 (177 aa).

Belongs to the universal ribosomal protein uL6 family. As to quaternary structure, part of the 50S ribosomal subunit.

In terms of biological role, this protein binds to the 23S rRNA, and is important in its secondary structure. It is located near the subunit interface in the base of the L7/L12 stalk, and near the tRNA binding site of the peptidyltransferase center. This is Large ribosomal subunit protein uL6 from Bordetella petrii (strain ATCC BAA-461 / DSM 12804 / CCUG 43448).